The primary structure comprises 644 residues: Protein cueball (644 aa).

The signal sequence occupies residues 1-26 (MIRIRFGMDVLLVLLLATCLLSPTHG). Over 27 to 531 (TPLEWDFAVT…VCLTPTVWTS (505 aa)) the chain is Extracellular. 2 N-linked (GlcNAc...) asparagine glycosylation sites follow: asparagine 82 and asparagine 108. LDL-receptor class B repeat units follow at residues 121–166 (TNLF…DVCR), 167–211 (RKLY…DQLS), and 212–257 (DRLF…TNDA). N-linked (GlcNAc...) asparagine glycosylation is found at asparagine 175 and asparagine 190. A glycan (N-linked (GlcNAc...) asparagine) is linked at asparagine 313. EGF-like domains follow at residues 398 to 430 (EIRE…FTGE) and 433 to 471 (EVSV…ARCE). 5 disulfides stabilise this stretch: cysteine 402/cysteine 411, cysteine 406/cysteine 421, cysteine 437/cysteine 447, cysteine 441/cysteine 459, and cysteine 461/cysteine 470. N-linked (GlcNAc...) asparagine glycans are attached at residues asparagine 473 and asparagine 508. Residues 532–552 (SVIIILVVGIVSSLLLVAVIV) traverse the membrane as a helical segment. The Cytoplasmic portion of the chain corresponds to 553-644 (HGIRRLYKPK…LIHNMEDDLY (92 aa)).

This sequence belongs to the cueball family.

Its subcellular location is the cell membrane. In terms of biological role, has a role in spermatogenesis and oogenesis. This chain is Protein cueball, found in Drosophila yakuba (Fruit fly).